Here is a 346-residue protein sequence, read N- to C-terminus: N-acetyl-gamma-glutamyl-phosphate reductase (346 aa).

Cys150 is a catalytic residue.

Belongs to the NAGSA dehydrogenase family. Type 1 subfamily.

It localises to the cytoplasm. It carries out the reaction N-acetyl-L-glutamate 5-semialdehyde + phosphate + NADP(+) = N-acetyl-L-glutamyl 5-phosphate + NADPH + H(+). It functions in the pathway amino-acid biosynthesis; L-arginine biosynthesis; N(2)-acetyl-L-ornithine from L-glutamate: step 3/4. Functionally, catalyzes the NADPH-dependent reduction of N-acetyl-5-glutamyl phosphate to yield N-acetyl-L-glutamate 5-semialdehyde. In Alkaliphilus metalliredigens (strain QYMF), this protein is N-acetyl-gamma-glutamyl-phosphate reductase.